The following is a 116-amino-acid chain: Tyrosine-protein phosphatase 10 (116 aa).

In terms of domain architecture, Tyrosine-protein phosphatase spans 1–116 (WRMVWEQNVS…SPTGYGPIVV (116 aa)). D86 provides a ligand contact to substrate.

It belongs to the protein-tyrosine phosphatase family.

It catalyses the reaction O-phospho-L-tyrosyl-[protein] + H2O = L-tyrosyl-[protein] + phosphate. In Styela plicata (Wrinkled sea squirt), this protein is Tyrosine-protein phosphatase 10 (STY-10).